Consider the following 550-residue polypeptide: Dihydroxy-acid dehydratase (550 aa).

Aspartate 78 serves as a coordination point for Mg(2+). [2Fe-2S] cluster is bound at residue cysteine 119. 2 residues coordinate Mg(2+): aspartate 120 and lysine 121. N6-carboxylysine is present on lysine 121. Cysteine 191 lines the [2Fe-2S] cluster pocket. Mg(2+) is bound at residue glutamate 440. Serine 466 (proton acceptor) is an active-site residue.

The protein belongs to the IlvD/Edd family. Homodimer. [2Fe-2S] cluster is required as a cofactor. It depends on Mg(2+) as a cofactor.

It carries out the reaction (2R)-2,3-dihydroxy-3-methylbutanoate = 3-methyl-2-oxobutanoate + H2O. The enzyme catalyses (2R,3R)-2,3-dihydroxy-3-methylpentanoate = (S)-3-methyl-2-oxopentanoate + H2O. Its pathway is amino-acid biosynthesis; L-isoleucine biosynthesis; L-isoleucine from 2-oxobutanoate: step 3/4. The protein operates within amino-acid biosynthesis; L-valine biosynthesis; L-valine from pyruvate: step 3/4. Its function is as follows. Functions in the biosynthesis of branched-chain amino acids. Catalyzes the dehydration of (2R,3R)-2,3-dihydroxy-3-methylpentanoate (2,3-dihydroxy-3-methylvalerate) into 2-oxo-3-methylpentanoate (2-oxo-3-methylvalerate) and of (2R)-2,3-dihydroxy-3-methylbutanoate (2,3-dihydroxyisovalerate) into 2-oxo-3-methylbutanoate (2-oxoisovalerate), the penultimate precursor to L-isoleucine and L-valine, respectively. This is Dihydroxy-acid dehydratase from Methanococcus maripaludis (strain C5 / ATCC BAA-1333).